The following is a 410-amino-acid chain: Cathepsin D (410 aa).

An N-terminal signal peptide occupies residues 1-20 (MKTPGVLLLILGLLASSSFA). The propeptide at 21–64 (IIRIPLRKFTSIRRTMTEVGGSVEDLILKGPITKYSMQSSPKTT) is activation peptide. In terms of domain architecture, Peptidase A1 spans 79–405 (YYGDIGIGTP…DRDNNRVGFA (327 aa)). 2 disulfides stabilise this stretch: Cys-91-Cys-160 and Cys-110-Cys-117. Asp-97 is a catalytic residue. The N-linked (GlcNAc...) asparagine glycan is linked to Asn-134. Asn-261 is a glycosylation site (N-linked (GlcNAc...) (high mannose) asparagine). An intrachain disulfide couples Cys-284 to Cys-288. The active site involves Asp-293. A disulfide bridge connects residues Cys-327 and Cys-364.

This sequence belongs to the peptidase A1 family. Consists of a light chain and a heavy chain. Interacts with ADAM30; this leads to activation of CTSD. Interacts with GRN; stabilizes CTSD; increases its proteolytic activity. N- and O-glycosylated. Post-translationally, undergoes proteolytic cleavage and activation by ADAM30.

Its subcellular location is the lysosome. It localises to the melanosome. The protein resides in the secreted. The protein localises to the extracellular space. It catalyses the reaction Specificity similar to, but narrower than, that of pepsin A. Does not cleave the 4-Gln-|-His-5 bond in B chain of insulin.. Its function is as follows. Acid protease active in intracellular protein breakdown. Plays a role in APP processing following cleavage and activation by ADAM30 which leads to APP degradation. The chain is Cathepsin D (Ctsd) from Mus musculus (Mouse).